Consider the following 503-residue polypeptide: Maturase K (503 aa).

It belongs to the intron maturase 2 family. MatK subfamily.

It is found in the plastid. It localises to the chloroplast. Usually encoded in the trnK tRNA gene intron. Probably assists in splicing its own and other chloroplast group II introns. This Caragana arborescens (Siberian pea tree) protein is Maturase K.